The primary structure comprises 340 residues: Adenosine kinase (340 aa).

Asp-292 is a catalytic residue.

Belongs to the carbohydrate kinase PfkB family. Requires Mg(2+) as cofactor.

It carries out the reaction adenosine + ATP = AMP + ADP + H(+). It functions in the pathway purine metabolism; AMP biosynthesis via salvage pathway; AMP from adenosine: step 1/1. This is Adenosine kinase (ado1) from Schizosaccharomyces pombe (strain 972 / ATCC 24843) (Fission yeast).